A 254-amino-acid chain; its full sequence is Glutathione S-transferase F14 (254 aa).

The 82-residue stretch at 4–85 (SKMKLHCGFI…YLAEQYKDVG (82 aa)) folds into the GST N-terminal domain. Glutathione is bound by residues 42–43 (AK), 56–57 (EV), and 69–70 (EP). Residues 92 to 231 (DPKKRAIMSM…DLMKQRRLPI (140 aa)) form the GST C-terminal domain.

The protein belongs to the GST superfamily. Phi family.

The protein resides in the cytoplasm. Its subcellular location is the cytosol. It carries out the reaction RX + glutathione = an S-substituted glutathione + a halide anion + H(+). Functionally, may be involved in the conjugation of reduced glutathione to a wide number of exogenous and endogenous hydrophobic electrophiles and have a detoxification role against certain herbicides. The protein is Glutathione S-transferase F14 of Arabidopsis thaliana (Mouse-ear cress).